Reading from the N-terminus, the 494-residue chain is Metalloprotease TIKI1 (494 aa).

A signal peptide spans 1 to 25; that stretch reads MTMMTMMMVSWSAFLQICWILMVRA. Over 26–467 the chain is Extracellular; that stretch reads NQFNPGEPSG…QEHERANHDR (442 aa). Residues Asn234 and Asn282 are each glycosylated (N-linked (GlcNAc...) asparagine). The helical transmembrane segment at 468–488 threads the bilayer; that stretch reads TFSGSSSRTGPALSALAVCVQ. The Cytoplasmic segment spans residues 489-494; the sequence is MLRLLL.

The protein belongs to the TIKI family. Requires Mn(2+) as cofactor. Co(2+) serves as cofactor.

It is found in the cell membrane. Functionally, metalloprotease that acts as a negative regulator of the Wnt signaling pathway by mediating the cleavage of the N-terminal residues of a subset of Wnt proteins. Following cleavage, Wnt proteins become oxidized and form large disulfide-bond oligomers, leading to their inactivation. This chain is Metalloprotease TIKI1 (trabd2a), found in Danio rerio (Zebrafish).